Consider the following 129-residue polypeptide: uncharacterized protein (129 aa).

Belongs to the HesB/IscA family.

This is an uncharacterized protein from Buchnera aphidicola subsp. Schizaphis graminum (strain Sg).